The chain runs to 212 residues: Octanoyltransferase (212 aa).

Residues 33-212 (GTAPELVWLL…ATFPEVFGAD (180 aa)) form the BPL/LPL catalytic domain. Substrate is bound by residues 72-79 (RGGQYTYH), 144-146 (AIG), and 157-159 (GIA). C175 functions as the Acyl-thioester intermediate in the catalytic mechanism.

The protein belongs to the LipB family.

It is found in the cytoplasm. The enzyme catalyses octanoyl-[ACP] + L-lysyl-[protein] = N(6)-octanoyl-L-lysyl-[protein] + holo-[ACP] + H(+). It functions in the pathway protein modification; protein lipoylation via endogenous pathway; protein N(6)-(lipoyl)lysine from octanoyl-[acyl-carrier-protein]: step 1/2. Functionally, catalyzes the transfer of endogenously produced octanoic acid from octanoyl-acyl-carrier-protein onto the lipoyl domains of lipoate-dependent enzymes. Lipoyl-ACP can also act as a substrate although octanoyl-ACP is likely to be the physiological substrate. The polypeptide is Octanoyltransferase (Paramagnetospirillum magneticum (strain ATCC 700264 / AMB-1) (Magnetospirillum magneticum)).